The following is a 291-amino-acid chain: Protein ILRUN (291 aa).

The interval 199 to 291 is disordered; the sequence is NTQPHRKVEG…LHGPYPFGQS (93 aa). Polar residues predominate over residues 212 to 228; that stretch reads PFASPQKNRQSDENNLT. Ser215, Ser222, and Ser265 each carry phosphoserine. A compositionally biased stretch (low complexity) spans 257 to 276; it reads LSQSSVNLSPSSPANNLSVV.

Interacts with IRF3; the interaction inhibits IRF3 binding to its DNA consensus sequence.

The protein localises to the cytoplasm. The protein resides in the nucleus. Negative regulator of innate antiviral response. Blocks IRF3-dependent cytokine production such as IFNA, IFNB and TNF. Interacts with IRF3 and inhibits IRF3 recruitment to type I IFN promoter sequences while also reducing nuclear levels of the coactivators EP300 and CREBBP. This Mus musculus (Mouse) protein is Protein ILRUN.